The following is a 1207-amino-acid chain: MIDVNNFHYMKIGLASPEKIRSWSFGEVKKPETINYRTLKPEKDGLFCERIFGPTKDWECSCGKYKRVRYKGMVCDRCGVEVTKSKVRRERMGHIELAAPVSHIWYFKGIPSRMGLLLDMSPRALEEVIYFASYVVVDPGPTGLEKKTLLSEAEFRDYYDKYPGQFVAKMGAEGIKDLLEEIDLDEELKLLRDELESATGQRLTRAIKRLEVVESFRNSGNKPSWMILDVLPIIPPEIRPMVQLDGGRFATSDLNDLYRRVINRNNRLKRLLDLGAPGIIVQNEKRMLQEAVDALIDNGRRGRPVTGPGNRPLKSLSHMLKGKQGRFRQNLLGKRVDYSGRSVIAVGPSLKMYQCGLPKEMALELFKPFVMKELVQREIATNIKNAKSKIERMDDEVWDVLEEVIREHPVLLNRAPTLHRLGIQAFEPTLVEGRAIRLHPLVTTAYNADFDGDQMAVHVPLSKEAQAEARMLMLAAQNILNPKDGKPVVTPSQDMVLGNYYLTLERKDAVNTGAIFNNTNEVLKAYANGFVHLHTRIGVHASSFNNPTFTEEQNKKILATSVGKIIFNEIIPDSFAYINEPTQENLERKTPNRYFIDPTTLGEGGLKEYFENEELIEPFNKKFLGNIIAEVFNRFSITDTSMMLDRMKDLGFKFSSKAGITVGVADIVVLPDKQQILDEHEKLVDRITKQFNRGLITEEERYNAVVEIWTDAKDQIQGELMQSLDKTNPIFMMSDSGARGNASNFTQLAGMRGLMAAPSGKIIELPITSSFREGLTVLEYFISTHGARKGLADTALKTADSGYLTRRLVDVAQDVIVREEDCGTDRGLLVSDIKEGTEMIEPFIERIEGRYSKETIHHPETDEIIIRPDELITPEIAKKITDAGIEQMYIRSAFTCNARHGVCEKCYGKNLATGEKVEVGEAVGTIAAQSIGEPGTQLTMRTFHTGGVAGSDITQGLPRIQEIFEARNPKGQAVITEIEGVVEDIKLAKDRQQEIVVKGANETRSYLASGTSRIIVEIGQPVQRGEVLTEGSIEPKNYLSVAGLNATESYLLKEVQKVYRMQGVEIDDKHVEVMVRQMLRKVRIIEAGDTKLLPGSLVDIHNFTDANREAFKHRKRPATAKPVLLGITKASLETESFLSAASFQETTRVLTDAAIKGKRDDLLGLKENVIIGKLIPAGTGMRRYSDVKYEKTAKPVAEVESQTEVTE.

Zn(2+) is bound by residues cysteine 60, cysteine 62, cysteine 75, and cysteine 78. Residues aspartate 449, aspartate 451, and aspartate 453 each coordinate Mg(2+). The Zn(2+) site is built by cysteine 822, cysteine 896, cysteine 903, and cysteine 906.

Belongs to the RNA polymerase beta' chain family. As to quaternary structure, the RNAP catalytic core consists of 2 alpha, 1 beta, 1 beta' and 1 omega subunit. When a sigma factor is associated with the core the holoenzyme is formed, which can initiate transcription. Requires Mg(2+) as cofactor. It depends on Zn(2+) as a cofactor.

The enzyme catalyses RNA(n) + a ribonucleoside 5'-triphosphate = RNA(n+1) + diphosphate. DNA-dependent RNA polymerase catalyzes the transcription of DNA into RNA using the four ribonucleoside triphosphates as substrates. The polypeptide is DNA-directed RNA polymerase subunit beta' (Staphylococcus aureus (strain USA300)).